A 328-amino-acid chain; its full sequence is Cytochrome c biogenesis protein CcsA (328 aa).

A run of 8 helical transmembrane segments spans residues 13 to 33 (ISFS…LVNL), 46 to 66 (GIII…IFSG), 73 to 93 (LYES…ISFF), 101 to 121 (LNAI…SGLL), 146 to 166 (MVLG…LLVI), 234 to 254 (IISL…VWAN), 263 to 283 (WDPK…YLHI), and 295 to 315 (AIVA…VNLL).

It belongs to the CcmF/CycK/Ccl1/NrfE/CcsA family. As to quaternary structure, may interact with Ccs1.

It is found in the plastid. The protein resides in the chloroplast thylakoid membrane. Functionally, required during biogenesis of c-type cytochromes (cytochrome c6 and cytochrome f) at the step of heme attachment. This is Cytochrome c biogenesis protein CcsA from Aethionema grandiflorum (Persian stone-cress).